The following is a 237-amino-acid chain: MTKLALIRHGQSAWNLENRFTGWWDADLTAQGEAEARHSGKLLAEVDADFRAGFTSVQTRAIRTMWLALTEMKRVWLPIEKDWHLNERHYGGLTGLNKAETAAKHGEDQVHVWRRSYDIPPPPLEVGSTFDLSTDPRYRGIDIPNTESLKTTLDRVLPYWQQKIAPGLIAGTDTMIAAHGNSLRALVKHLFNVPDETITGLEIPTGNPLLIELDPNLKPVSVRYLDAERAHSLPDLP.

Substrate-binding positions include arginine 8–asparagine 15, threonine 21–glycine 22, arginine 60, glutamate 87–tyrosine 90, lysine 98, arginine 114–arginine 115, and glycine 180–asparagine 181. Residue histidine 9 is the Tele-phosphohistidine intermediate of the active site. Glutamate 87 acts as the Proton donor/acceptor in catalysis.

It belongs to the phosphoglycerate mutase family. BPG-dependent PGAM subfamily. As to quaternary structure, homodimer.

It catalyses the reaction (2R)-2-phosphoglycerate = (2R)-3-phosphoglycerate. It functions in the pathway carbohydrate degradation; glycolysis; pyruvate from D-glyceraldehyde 3-phosphate: step 3/5. Functionally, catalyzes the interconversion of 2-phosphoglycerate and 3-phosphoglycerate. This Hyphomonas neptunium (strain ATCC 15444) protein is 2,3-bisphosphoglycerate-dependent phosphoglycerate mutase.